The primary structure comprises 315 residues: Trimethylguanosine synthase (315 aa).

The tract at residues 1 to 58 (MGRTFIHASKIKHAARKRKHHSNFRTLIKLLNNDAYKIESSKPLKNGKLFKYWKNRRR) is required for correct nucleolar localization. Asp126 is an S-adenosyl-L-methionine binding site. The segment at 271-315 (TENSRRESSEKEELSSENEELSKRKKHESTTTTKDNTVDIYDVNG) is disordered. Residues 273–284 (NSRRESSEKEEL) are compositionally biased toward basic and acidic residues.

This sequence belongs to the methyltransferase superfamily. Trimethylguanosine synthase family. As to quaternary structure, monomer. Interacts with the spliceosomal snRNP core component SMB1 and the snoRNP components CBF5 and NOP58.

It localises to the nucleus. It is found in the nucleolus. The enzyme catalyses a 5'-end (N(7)-methyl 5'-triphosphoguanosine)-ribonucleoside in snRNA + S-adenosyl-L-methionine = a 5'-end (N(2),N(7)-dimethyl 5'-triphosphoguanosine)-ribonucleoside in snRNA + S-adenosyl-L-homocysteine + H(+). The catalysed reaction is a 5'-end (N(7)-methyl 5'-triphosphoguanosine)-ribonucleoside in snoRNA + S-adenosyl-L-methionine = a 5'-end (N(2),N(7)-dimethyl 5'-triphosphoguanosine)-ribonucleoside in snoRNA + S-adenosyl-L-homocysteine + H(+). It carries out the reaction a 5'-end (N(2),N(7)-dimethyl 5'-triphosphoguanosine)-ribonucleoside in snRNA + S-adenosyl-L-methionine = a 5'-end (N(2),N(2),N(7)-trimethyl 5'-triphosphoguanosine)-ribonucleoside in snRNA + S-adenosyl-L-homocysteine + H(+). It catalyses the reaction a 5'-end (N(2),N(7)-dimethyl 5'-triphosphoguanosine)-ribonucleoside in snoRNA + S-adenosyl-L-methionine = a 5'-end (N(2),N(2),N(7)-trimethyl 5'-triphosphoguanosine)-ribonucleoside in snoRNA + S-adenosyl-L-homocysteine + H(+). Its activity is regulated as follows. Substrate inhibited by S-adenosyl-L-homocysteine. Catalyzes the two serial methylation steps for the conversion of the 7-monomethylguanosine (m(7)G) caps of snRNAs and snoRNAs to a 2,2,7-trimethylguanosine (m(2,2,7)G) cap structure. The enzyme is specific for guanine, and N7 methylation must precede N2 methylation. Hypermethylates the m3G cap on TLC1 telomerase which affects telomere silencing and telomere length regulation. Required for pre-mRNA splicing, pre-rRNA processing and small ribosomal subunit synthesis. Involved in nucleolar structural organization. This is Trimethylguanosine synthase (TGS1) from Saccharomyces cerevisiae (strain ATCC 204508 / S288c) (Baker's yeast).